Consider the following 584-residue polypeptide: Aspartate--tRNA(Asp/Asn) ligase (584 aa).

Glutamate 177 contributes to the L-aspartate binding site. The interval glutamine 201 to lysine 204 is aspartate. Arginine 223 is an L-aspartate binding site. Residues arginine 223 to glutamate 225 and glutamine 232 contribute to the ATP site. Histidine 447 contributes to the L-aspartate binding site. Glutamate 481 lines the ATP pocket. Arginine 488 provides a ligand contact to L-aspartate. Position 533-536 (glycine 533–arginine 536) interacts with ATP.

The protein belongs to the class-II aminoacyl-tRNA synthetase family. Type 1 subfamily. In terms of assembly, homodimer.

The protein resides in the cytoplasm. The catalysed reaction is tRNA(Asx) + L-aspartate + ATP = L-aspartyl-tRNA(Asx) + AMP + diphosphate. Its function is as follows. Aspartyl-tRNA synthetase with relaxed tRNA specificity since it is able to aspartylate not only its cognate tRNA(Asp) but also tRNA(Asn). Reaction proceeds in two steps: L-aspartate is first activated by ATP to form Asp-AMP and then transferred to the acceptor end of tRNA(Asp/Asn). The sequence is that of Aspartate--tRNA(Asp/Asn) ligase from Chlamydia pneumoniae (Chlamydophila pneumoniae).